The following is a 321-amino-acid chain: Tetraketide alpha-pyrone reductase 2 (321 aa).

An N-acetylserine modification is found at serine 2. NADP(+) is bound by residues 4–28, lysine 40, and tyrosine 160; that span reads YLVT…GHTV.

It belongs to the NAD(P)-dependent epimerase/dehydratase family. Dihydroflavonol-4-reductase subfamily.

The protein localises to the cytoplasm. Functionally, may be involved in the biosynthesis of hydroxylated tetraketide compounds that serve as sporopollenin precursors (the main constituents of exine). Acts on tetraketide alpha-pyrones and reduces the carbonyl function on the tetraketide alkyl chain to a secondary alcohol function. The polypeptide is Tetraketide alpha-pyrone reductase 2 (TKPR2) (Arabidopsis thaliana (Mouse-ear cress)).